A 728-amino-acid chain; its full sequence is MDLNTKNNNKKVFEIIFENNVLRIEIGEISRQANGSVMLFYKDTVILSVAVCGDKKNSLNFLPLTVNYQEKLYAAGKIPGGFLRREGKPSDQEILCSRLIDRTIRPLFSKNFKNEVQLINMVLSSDPDGNNENIALLGSSLALLISDIPFFEPVSSVCVGKIGDNLIINPTLSQRENSSFFLILAGTKDSLNMVEMSSKEISENNFLESIKFGHEIIKKLCLFQTEIANQIGKTKIKIPLHNVNNLLEVEIKDKYFSEIEMILKNKCNVNNVKKSDILKKLKENVLENYKEKFLNNKKDNFNLLDLENQKLYLNEVEIIFDFLVRTIIRETILKENIRPDGRNSSEIRSITSRIDILPRTHGSALFTRGGTQSLAIVTLGTLRESKIIDDLSDEVDKRFMLHYNFPAFAVGSVGRYLAPSRREIGHGMLAEKALECVLPSENDFPYSIRVVSEILDSNGSSSQATICASSMALMSAGVPLKSLVAGVAMGLIVDDIDKINHYTILSDIEGLEDYQGDIDFKIAGTKVGITALQLDIKIKGITLEIFEKVLEQAKKDRIKILNEMEKVINKSRNEVSKYAPKVKMILIKPEKIRDIIGSGGKIINQIIEKHDNVKIDIMQDGKIYIMHQNMEIVDLTVTYIQNFLKKIKVENVYEVKILRFVKDKMDKTFGAIAEIFPGIEGFIHISKLENYKVDKVEDVLKIGQIILVKCIKINERGQIDLSKKDVFK.

Mg(2+)-binding residues include Asp513 and Asp519. The region spanning 580 to 640 (PKVKMILIKP…EIVDLTVTYI (61 aa)) is the KH domain. Residues 650-724 (ENVYEVKILR…ERGQIDLSKK (75 aa)) form the S1 motif domain.

This sequence belongs to the polyribonucleotide nucleotidyltransferase family. Requires Mg(2+) as cofactor.

Its subcellular location is the cytoplasm. It carries out the reaction RNA(n+1) + phosphate = RNA(n) + a ribonucleoside 5'-diphosphate. Involved in mRNA degradation. Catalyzes the phosphorolysis of single-stranded polyribonucleotides processively in the 3'- to 5'-direction. This chain is Polyribonucleotide nucleotidyltransferase, found in Phytoplasma mali (strain AT).